Reading from the N-terminus, the 552-residue chain is Steroid transmembrane transporter SLC22A24 (552 aa).

12 consecutive transmembrane segments (helical) span residues 16 to 36 (FQIL…PHML), 144 to 164 (LISV…LIFG), 178 to 198 (CCLL…TFPV), 204 to 224 (FLGG…MSEW), 235 to 255 (GIIL…GFVI), 267 to 287 (IPLF…QWLI), 350 to 370 (IFYL…LMLN), 378 to 398 (IFLF…AVLL), 407 to 427 (ISQM…IFLS), 435 to 455 (VALA…HTVH), 469 to 489 (IGLN…LMIL), and 496 to 516 (LPWI…LLLP). Positions 524–552 (PNTIQDVENNRRDSRKTKQEDISMKVTQF) are disordered. Residues 531-546 (ENNRRDSRKTKQEDIS) are compositionally biased toward basic and acidic residues.

The protein belongs to the major facilitator (TC 2.A.1) superfamily. Organic cation transporter (TC 2.A.1.19) family.

Its subcellular location is the cell membrane. It catalyses the reaction estrone 3-sulfate(out) + glutarate(in) = estrone 3-sulfate(in) + glutarate(out). It carries out the reaction 17beta-estradiol 17-O-(beta-D-glucuronate)(out) + glutarate(in) = 17beta-estradiol 17-O-(beta-D-glucuronate)(in) + glutarate(out). The enzyme catalyses taurocholate(out) + glutarate(in) = taurocholate(in) + glutarate(out). The catalysed reaction is glycocholate(out) + glutarate(in) = glycocholate(in) + glutarate(out). It catalyses the reaction dehydroepiandrosterone 3-sulfate(out) + glutarate(in) = dehydroepiandrosterone 3-sulfate(in) + glutarate(out). It carries out the reaction glutarate(in) + succinate(out) = glutarate(out) + succinate(in). In terms of biological role, renal transmembrane organic anion/dicarboxylate exchanger that participates in the reabsorption of conjugated steroids, as well as bile acids, driven by an outward gradient of dicarboxylates such as glutarate or succinate. Transports taurocholate, estrone 3-sulfate, and estradiol-17-glucuronide (17beta-estradiol 17-O-(beta-D-glucuronate)), but not androstanediol glucuronide (5alpha-androstane-3alpha,17beta-diol 3-O-(beta-D-glucuronate)). This chain is Steroid transmembrane transporter SLC22A24, found in Equus caballus (Horse).